The primary structure comprises 416 residues: Adenylosuccinate synthetase (416 aa).

GTP is bound by residues 13–19 (GDEGKGK) and 41–43 (GHT). The active-site Proton acceptor is Asp-14. Asp-14 and Gly-41 together coordinate Mg(2+). IMP contacts are provided by residues 14 to 17 (DEGK), 39 to 42 (NAGH), Thr-126, Arg-140, Gln-220, Thr-235, and Arg-299. His-42 serves as the catalytic Proton donor. 295–301 (VSTGRKR) is a binding site for substrate. GTP is bound by residues Arg-301, 327-329 (KLD), and 405-407 (STS).

This sequence belongs to the adenylosuccinate synthetase family. As to quaternary structure, homodimer. The cofactor is Mg(2+).

Its subcellular location is the cytoplasm. The enzyme catalyses IMP + L-aspartate + GTP = N(6)-(1,2-dicarboxyethyl)-AMP + GDP + phosphate + 2 H(+). It participates in purine metabolism; AMP biosynthesis via de novo pathway; AMP from IMP: step 1/2. Its function is as follows. Plays an important role in the de novo pathway of purine nucleotide biosynthesis. Catalyzes the first committed step in the biosynthesis of AMP from IMP. In Campylobacter jejuni subsp. jejuni serotype O:6 (strain 81116 / NCTC 11828), this protein is Adenylosuccinate synthetase.